The chain runs to 1020 residues: Phosphatidylinositol 3-kinase VPS34 (1020 aa).

Positions 49–210 (LSTKFEDPTV…NWLDKMVLPK (162 aa)) constitute a C2 PI3K-type domain. In terms of domain architecture, PIK helical spans 331–577 (DKELKPTPQL…DGPIKIYMDI (247 aa)). Positions 666 to 1004 (YPEESSVFKS…LINDSVNAFL (339 aa)) constitute a PI3K/PI4K catalytic domain. Residues 672 to 678 (VFKSSLA) are G-loop. Residues 873-881 (GVGDRHLDN) form a catalytic loop region. Positions 892–913 (HADFGYILGRDPKPFPPLMKLP) are activation loop.

It belongs to the PI3/PI4-kinase family. As to quaternary structure, component of the autophagy-specific VPS34 PI3-kinase complex I composed of at least VPS15, VPS30, VPS34, and of the VPS34 PI3-kinase complex II composed of VPS15, VPS30, VPS34 and VPS38. Interacts with VMNA7. Post-translationally, autophosphorylated.

It is found in the golgi apparatus. The protein localises to the trans-Golgi network membrane. It localises to the endosome membrane. It catalyses the reaction a 1,2-diacyl-sn-glycero-3-phospho-(1D-myo-inositol) + ATP = a 1,2-diacyl-sn-glycero-3-phospho-(1D-myo-inositol-3-phosphate) + ADP + H(+). Its function is as follows. Multifunctional phosphatidylinositol 3-kinase involved in acidification of vacuoles, pH-dependent cell growth, and autophagocytosis. Plays an important role in protein transport and virulence. Component of the autophagy-specific VPS34 PI3-kinase complex I essential to recruit the ATG8-phosphatidylinositol conjugate and the ATG12-ATG5 conjugate to the pre-autophagosomal structure. Also involved in endosome-to-Golgi retrograde transport as part of the VPS34 PI3-kinase complex II. This second complex is required for the endosome-to-Golgi retrieval of PEP1 and KEX2, and the recruitment of VPS5 and VPS7, two components of the retromer complex, to endosomal membranes (probably through the synthesis of a specific pool of phosphatidylinositol 3-phosphate recruiting the retromer to the endosomes). Finally, it might also be involved in ethanol tolerance and cell wall integrity. The sequence is that of Phosphatidylinositol 3-kinase VPS34 from Candida albicans (strain SC5314 / ATCC MYA-2876) (Yeast).